The primary structure comprises 528 residues: MSLPVVLIADKLAPSTVAALGDQVEVRWVDGPDRDKLLAAVPEADALLVRSATTVDAEVLAAAPKLKIVARAGVGLDNVDVDAATARGVLVVNAPTSNIHSAAEHALALLLAASRQIPAADASLREHTWKRSSFSGTEIFGKTVGVVGLGRIGQLVAQRIAAFGAYVVAYDPYVSPARAAQLGIELLSLDDLLARADFISVHLPKTPETAGLIDKEALAKTKPGVIIVNAARGGLVDEAALADAITGGHVRAAGLDVFATEPCTDSPLFELAQVVVTPHLGASTAEAQDRAGTDVAESVRLALAGEFVPDAVNVGGGVVNEEVAPWLDLVRKLGVLAGVLSDELPVSLSVQVRGELAAEEVEVLRLSALRGLFSAVIEDAVTFVNAPALAAERGVTAEICKASESPNHRSVVDVRAVGADGSVVTVSGTLYGPQLSQKIVQINGRHFDLRAQGINLIIHYVDRPGALGKIGTLLGTAGVNIQAAQLSEDAEGPGATILLRLDQDVPDDVRTAIAAAVDAYKLEVVDLS.

NAD(+) contacts are provided by residues 151 to 152 (RI), Asp-171, 230 to 232 (AAR), and Asp-256. The active site involves Arg-232. Glu-261 is an active-site residue. Residue His-279 is the Proton donor of the active site. 279-282 (HLGA) contributes to the NAD(+) binding site. The ACT domain maps to 455-527 (NLIIHYVDRP…DAYKLEVVDL (73 aa)).

The protein belongs to the D-isomer specific 2-hydroxyacid dehydrogenase family.

The catalysed reaction is (2R)-3-phosphoglycerate + NAD(+) = 3-phosphooxypyruvate + NADH + H(+). The enzyme catalyses (R)-2-hydroxyglutarate + NAD(+) = 2-oxoglutarate + NADH + H(+). Its pathway is amino-acid biosynthesis; L-serine biosynthesis; L-serine from 3-phospho-D-glycerate: step 1/3. Its function is as follows. Catalyzes the reversible oxidation of 3-phospho-D-glycerate to 3-phosphonooxypyruvate, the first step of the phosphorylated L-serine biosynthesis pathway. Also catalyzes the reversible oxidation of 2-hydroxyglutarate to 2-oxoglutarate. This Mycobacterium bovis (strain ATCC BAA-935 / AF2122/97) protein is D-3-phosphoglycerate dehydrogenase (serA).